We begin with the raw amino-acid sequence, 485 residues long: MTSQYVTEPPSSGLVDLVTSKGTISIALFPTQAPLACRNFLTLALEGFYDNLVFHRLIPNFILQTGDPSATGTGGESIYGEPFPIESHSRLKFNRRGLLGMAANQDRTNESQFFLTLDATPELTGKHTLMGKVEGKSIYTLVELVEGVELVDGDRPRYPIKLHEVRVVENPFDDLQPRTTKKQRIAEERRKKHEMETRVAEEQKRKRSKAKKNTGLLSFGAEEEAEDEVALKGPKSSHDLLKDDKHLSRQTIETSKSTKANTPAVSANISSKEKRFLAQSSSSTTPPAVTKQASKDGTSDAPHPTATLKSEHSGPSDQKASSSTGRDFLASQRAKYLSSSHPSTAKQDDSYSALLSFQSRLRTRPSSTTPIAKPLPSVGVDEVEEEAGEYGASDDDDDWRSHRLDAGGQPLVAGQNAGKDTLEDYEVLDPRDHTDRERNPKAESSRDGKRGRDWVEHDRKYQNDRSRRHREHDKHPQQRRQRSII.

Positions 11–167 (SSGLVDLVTS…YPIKLHEVRV (157 aa)) constitute a PPIase cyclophilin-type domain. Residues 173–485 (DDLQPRTTKK…PQQRRQRSII (313 aa)) form a disordered region. Basic and acidic residues-rich tracts occupy residues 184-204 (RIAE…EEQK) and 236-247 (SSHDLLKDDKHL). Composition is skewed to polar residues over residues 249–270 (RQTI…ANIS), 278–292 (AQSS…VTKQ), 315–325 (PSDQKASSSTG), and 353–370 (ALLS…STTP). Positions 381 to 398 (DEVEEEAGEYGASDDDDD) are enriched in acidic residues. The segment covering 428-465 (LDPRDHTDRERNPKAESSRDGKRGRDWVEHDRKYQNDR) has biased composition (basic and acidic residues). The segment covering 466 to 485 (SRRHREHDKHPQQRRQRSII) has biased composition (basic residues).

The protein belongs to the cyclophilin-type PPIase family. CWC27 subfamily. As to quaternary structure, associated with the spliceosome.

It is found in the cytoplasm. The protein resides in the nucleus. It catalyses the reaction [protein]-peptidylproline (omega=180) = [protein]-peptidylproline (omega=0). Functionally, PPIases accelerate the folding of proteins. It catalyzes the cis-trans isomerization of proline imidic peptide bonds in oligopeptides. Involved in pre-mRNA splicing. The protein is Peptidyl-prolyl isomerase CWC27 (CWC27) of Mycosarcoma maydis (Corn smut fungus).